A 509-amino-acid chain; its full sequence is Coiled-coil domain-containing protein 181 (509 aa).

Disordered stretches follow at residues 1–122 (MDED…EDEE) and 237–369 (FLPP…EKKK). Composition is skewed to basic and acidic residues over residues 22-33 (DLEWLINDKEKS) and 41-56 (ACKKEDDLDQVLKENE). A compositionally biased stretch (polar residues) spans 60–69 (ELGQQLSDPD). Basic and acidic residues-rich tracts occupy residues 70-82 (NSPKDEALPRRND) and 266-275 (IKKEESEAKG). Residues 319–333 (RIQSAGVSPVTSTYC) are compositionally biased toward polar residues. Coiled-coil stretches lie at residues 335–377 (SPRQ…VFKA) and 418–488 (LKKK…RSKQ). Residues 337 to 369 (RQKELQKQLERKREKLKREEEQRKLEEENEKKK) show a composition bias toward basic and acidic residues.

It belongs to the CCDC181 family. As to quaternary structure, homodimer. Interacts with HOOK1. Interacts with HOOK2. Interacts with HOOK3. Predominantly expressed in testis. Expressed at lower level in brain, eye, trachea and lung. Barely expressed in tongue, heart, liver, kidney, spleen and muscle. Present at high level in elongating spermatids, whereas lower levels are observed in round spermatids (at protein level).

The protein localises to the cytoplasm. Its subcellular location is the cytoskeleton. The protein resides in the cell projection. It localises to the cilium. It is found in the flagellum. Its function is as follows. Microtubule-binding protein that localizes to the microtubular manchette of elongating spermatids. The protein is Coiled-coil domain-containing protein 181 of Mus musculus (Mouse).